Consider the following 1254-residue polypeptide: SUN domain-containing ossification factor (1254 aa).

A signal peptide spans 1-29; that stretch reads MKKHRRALALVSCLFLCSLVWLPSWRVCC. 3 disordered regions span residues 58 to 88, 118 to 270, and 282 to 304; these read KKDEREGPINAESLGKSGSNLPISPKEHKLK, EESS…DIPT, and EKEKSQSMHASSNGGSHATKKVQ. Residues 130 to 145 show a composition bias toward low complexity; the sequence is VENISSSSTSEITPIS. The span at 165–175 shows a compositional bias: acidic residues; that stretch reads EQSETDCDVGE. N-linked (GlcNAc...) asparagine glycans are attached at residues asparagine 202 and asparagine 236. The span at 241 to 253 shows a compositional bias: basic and acidic residues; it reads LKNESSDYTKPGD. Residues 284 to 453 enclose the SUN domain; that stretch reads EKSQSMHASS…SLIRVFGTSM (170 aa). The span at 288-297 shows a compositional bias: polar residues; sequence SMHASSNGGS. Asparagine 524 is a glycosylation site (N-linked (GlcNAc...) asparagine). Disordered regions lie at residues 530 to 553, 583 to 605, and 759 to 788; these read NATATAAPKMPESTPVSTPVPSPE, EEEEEASPSTVTLLGSGEQEDES, and HIPSPVIPQESSVEIDNETEQKSESFSSIE. Low complexity predominate over residues 540-553; the sequence is PESTPVSTPVPSPE. A coiled-coil region spans residues 909 to 1009; that stretch reads NQKESVFMRL…VAELKREVSD (101 aa). N-linked (GlcNAc...) asparagine glycans are attached at residues asparagine 928 and asparagine 955. Residues 1011 to 1031 form a helical membrane-spanning segment; sequence QSYLVISLVLCVVLGLMLCMQ. Serine 1081 is subject to Phosphoserine. Residues 1152–1172 form a disordered region; it reads EVYHSSYKGPPSEGSSETSSQ. The segment covering 1163–1172 has biased composition (low complexity); that stretch reads SEGSSETSSQ.

Post-translationally, O-glycosylated. O-mannosylated by POMT1 and POMT2 and elongated by POMGNT1. N-glycosylated. As to expression, highly expressed in pancreas and testis and to a lower extent in prostate, ovary, heart, thymus, small intestine and spleen.

It localises to the rough endoplasmic reticulum membrane. Functionally, required for bone modeling during late embryogenesis. Regulates type I collagen synthesis in osteoblasts during their postnatal maturation. In Homo sapiens (Human), this protein is SUN domain-containing ossification factor (SUCO).